The primary structure comprises 435 residues: Serine/threonine-protein kinase 40 (435 aa).

Residues 35-332 (FVLGPRLGNS…DVLEALSAII (298 aa)) enclose the Protein kinase domain. ATP is bound by residues 41-49 (LGNSPVPSI) and K66. The Proton acceptor role is filled by D197.

It belongs to the protein kinase superfamily. CAMK Ser/Thr protein kinase family.

It localises to the nucleus. The protein localises to the cytoplasm. The enzyme catalyses L-seryl-[protein] + ATP = O-phospho-L-seryl-[protein] + ADP + H(+). It catalyses the reaction L-threonyl-[protein] + ATP = O-phospho-L-threonyl-[protein] + ADP + H(+). In terms of biological role, may be a negative regulator of NF-kappa-B and p53-mediated gene transcription. The protein is Serine/threonine-protein kinase 40 (Stk40) of Mus musculus (Mouse).